Reading from the N-terminus, the 144-residue chain is Glycine-rich protein DC9.1 (144 aa).

The chain crosses the membrane as a helical span at residues 5–25; it reads IFLLLGLSIAFAILISSEVAA. 11 consecutive repeat copies span residues 37–42, 43–48, 50–55, 56–61, 63–68, 69–74, 76–81, 82–87, 89–94, 102–107, and 108–113. The interval 37–113 is 11 X 6 AA tandem repeats of G-Y-[NH]-N-G -G; that stretch reads GYNNGGGYHN…NNGGGHHGGG (77 aa).

Belongs to the GRP family.

The protein localises to the membrane. The chain is Glycine-rich protein DC9.1 from Daucus carota (Wild carrot).